A 438-amino-acid polypeptide reads, in one-letter code: 5-methylthioadenosine/S-adenosylhomocysteine deaminase (438 aa).

Zn(2+)-binding residues include H66 and H68. 3 residues coordinate substrate: E95, R148, and H188. H215 provides a ligand contact to Zn(2+). Substrate contacts are provided by E218 and D305. Residue D305 participates in Zn(2+) binding.

This sequence belongs to the metallo-dependent hydrolases superfamily. MTA/SAH deaminase family. Requires Zn(2+) as cofactor.

The enzyme catalyses S-adenosyl-L-homocysteine + H2O + H(+) = S-inosyl-L-homocysteine + NH4(+). The catalysed reaction is S-methyl-5'-thioadenosine + H2O + H(+) = S-methyl-5'-thioinosine + NH4(+). Catalyzes the deamination of 5-methylthioadenosine and S-adenosyl-L-homocysteine into 5-methylthioinosine and S-inosyl-L-homocysteine, respectively. Is also able to deaminate adenosine. The polypeptide is 5-methylthioadenosine/S-adenosylhomocysteine deaminase (Halalkalibacterium halodurans (strain ATCC BAA-125 / DSM 18197 / FERM 7344 / JCM 9153 / C-125) (Bacillus halodurans)).